A 296-amino-acid chain; its full sequence is Giardin subunit alpha-4 (296 aa).

Annexin repeat units lie at residues 3–72, 74–146, 153–223, and 226–294; these read ATVS…VHAW, SRFE…GWVK, KSIK…AHHW, and DPGQ…VFWR.

It belongs to the annexin family. Giardin subunit alpha subfamily.

It is found in the cytoplasm. It localises to the cytoskeleton. Giardins are involved in parasite attachment to the intestinal mucosa and in the cytoskeletal disassembly and reassembly that marks the transition from infectious trophozoite to transmissible cyst. They may interact with other cytoskeletal proteins such as microtubules in the microribbons or crossbridges, to maintain the integrity of the ventral disk. This Giardia intestinalis (Giardia lamblia) protein is Giardin subunit alpha-4.